A 170-amino-acid chain; its full sequence is Cyclic pyranopterin monophosphate synthase 1 (170 aa).

Substrate-binding positions include 79-81 and 116-117; these read LCH and ME. D131 is a catalytic residue.

The protein belongs to the MoaC family. As to quaternary structure, homohexamer; trimer of dimers.

It catalyses the reaction (8S)-3',8-cyclo-7,8-dihydroguanosine 5'-triphosphate = cyclic pyranopterin phosphate + diphosphate. The protein operates within cofactor biosynthesis; molybdopterin biosynthesis. Its function is as follows. Catalyzes the conversion of (8S)-3',8-cyclo-7,8-dihydroguanosine 5'-triphosphate to cyclic pyranopterin monophosphate (cPMP). This is Cyclic pyranopterin monophosphate synthase 1 (moaC1) from Mycobacterium bovis (strain ATCC BAA-935 / AF2122/97).